The chain runs to 230 residues: MVPEYSRLYKILGYSFKNYTLLVRALTHRSKTKKNYERLEFLGDSILGFVIAEVLYMEFPDLAEGKLSQIRSKLVKGVTLANLALNFKLDEYIILGASEQGGHKREKILEDVFEAIIGAIYLDSDFATVKKVIVNWYKPVISTLNLDDVKVKDSKSKLQEILLQNGLSLPEYSIETIDGKDHEQEFTVKALSNDLNIEVRAKGTSRKKAEQKAAEKMIQILSQQGLHEKK.

The RNase III domain maps to tyrosine 5–aspartate 125. A Mg(2+)-binding site is contributed by glutamate 40. Aspartate 44 is an active-site residue. Mg(2+) contacts are provided by aspartate 111 and glutamate 114. Glutamate 114 is a catalytic residue. Residues aspartate 153–glutamine 223 enclose the DRBM domain.

It belongs to the ribonuclease III family. Homodimer. It depends on Mg(2+) as a cofactor.

The protein localises to the cytoplasm. It catalyses the reaction Endonucleolytic cleavage to 5'-phosphomonoester.. Its function is as follows. Digests double-stranded RNA. Involved in the processing of primary rRNA transcript to yield the immediate precursors to the large and small rRNAs (23S and 16S). Processes some mRNAs, and tRNAs when they are encoded in the rRNA operon. Processes pre-crRNA and tracrRNA of type II CRISPR loci if present in the organism. The sequence is that of Ribonuclease 3 from Francisella philomiragia subsp. philomiragia (strain ATCC 25017 / CCUG 19701 / FSC 153 / O#319-036).